Consider the following 224-residue polypeptide: 7-cyano-7-deazaguanine synthase (224 aa).

12–22 is an ATP binding site; the sequence is LSGGLDSSTVT. C193, C201, C204, and C207 together coordinate Zn(2+).

This sequence belongs to the QueC family. Zn(2+) is required as a cofactor.

It carries out the reaction 7-carboxy-7-deazaguanine + NH4(+) + ATP = 7-cyano-7-deazaguanine + ADP + phosphate + H2O + H(+). Its pathway is purine metabolism; 7-cyano-7-deazaguanine biosynthesis. In terms of biological role, catalyzes the ATP-dependent conversion of 7-carboxy-7-deazaguanine (CDG) to 7-cyano-7-deazaguanine (preQ(0)). The polypeptide is 7-cyano-7-deazaguanine synthase (Prochlorococcus marinus (strain AS9601)).